Here is a 2475-residue protein sequence, read N- to C-terminus: Gellan lyase (2475 aa).

The N-terminal stretch at 1 to 35 (MRFSWKKLVSAALVMALLVGIVYPAASGRGAVASA) is a signal peptide. The 86-residue stretch at 623–708 (APANVQVAIS…QPATATSPGE (86 aa)) folds into the Fibronectin type-III domain. The 224-residue stretch at 1295–1518 (GAFSLTIDDN…RDQIWVGRYG (224 aa)) folds into the NodB homology domain. Residues 2111–2223 (QPGQQLELTV…VSTAVSLSDF (113 aa)) form the Cohesin domain.

Subject to proteolytic processing after secretion. Cleavage occurs between Gly-1205 and Leu-1206. This gives rise to a N-terminal gellan lyase of 130 kDa being the mature form of the gellan lyase. The function of C-terminal gellan lyase is not known.

The protein resides in the secreted. The catalysed reaction is Eliminative cleavage of beta-D-glucopyranosyl-(1-&gt;4)-beta-D-glucopyranosyluronate bonds of gellan backbone releasing tetrasaccharides containing a 4-deoxy-4,5-unsaturated D-glucopyranosyluronic acid at the non-reducing end. The tetrasaccharide produced from deacetylated gellan is beta-D-4-deoxy-Delta(4)-GlcAp-(1-&gt;4)-beta-D-Glcp-(1-&gt;4)-alpha-L-Rhap-(1-&gt;3)-beta-D-Glcp.. Functionally, cleaves the glycosidic bonds of gellan backbone and releases tetrasaccharide units of glucuronyl-glucosyl-rhamnosyl-glucose with unsaturated glucuronic acid at the non-reducing terminal. The enzyme is highly specific to the heteropolysaccharide gellan, especially deacetylated gellan. This Bacillus sp protein is Gellan lyase.